Consider the following 321-residue polypeptide: Pheromone-regulated membrane protein 5 (321 aa).

The segment at 35 to 59 (SSSSSSSSLPLLSNSTSSSIIPSIT) is disordered. The helical transmembrane segment at 81-101 (FIIVGGIAGVIFLAILLWWVI) threads the bilayer. A Phosphoserine modification is found at Ser-132. A compositionally biased stretch (low complexity) spans 241-250 (TISSSSASSL). The segment at 241 to 321 (TISSSSASSL…HMLEGKEQDE (81 aa)) is disordered. Residues 253–264 (GNEKEVGEDIRK) show a composition bias toward basic and acidic residues. Polar residues predominate over residues 279-288 (SPESDGSVNR). Residues Ser-282, Ser-285, and Ser-291 each carry the phosphoserine modification. Basic and acidic residues predominate over residues 312-321 (HMLEGKEQDE). Lys-317 is covalently cross-linked (Glycyl lysine isopeptide (Lys-Gly) (interchain with G-Cter in ubiquitin)).

This sequence belongs to the PRM5 family.

It is found in the membrane. This chain is Pheromone-regulated membrane protein 5 (PRM5), found in Saccharomyces cerevisiae (strain YJM789) (Baker's yeast).